The sequence spans 202 residues: Imidazoleglycerol-phosphate dehydratase (202 aa).

It belongs to the imidazoleglycerol-phosphate dehydratase family.

It is found in the cytoplasm. It carries out the reaction D-erythro-1-(imidazol-4-yl)glycerol 3-phosphate = 3-(imidazol-4-yl)-2-oxopropyl phosphate + H2O. It functions in the pathway amino-acid biosynthesis; L-histidine biosynthesis; L-histidine from 5-phospho-alpha-D-ribose 1-diphosphate: step 6/9. This chain is Imidazoleglycerol-phosphate dehydratase, found in Brucella suis (strain ATCC 23445 / NCTC 10510).